Consider the following 543-residue polypeptide: MASPGLPQPPTEDAAWPLRLLHAPPGLLRLDPTGGALLLLVLAALLGWSWLWRLPERGIPPGPAPWPVVGNFGFVLLPRFLRRKSWPYRRARNGGMNASGQGVQLLLADLGRVYGNIFSFLIGHYLVVVLNDFHSVREALVQQAEVFSDRPRVPLTSIMTKGKGIVFAHYGPVWRQQRKFSHSTLRHFGLGKLSLEPKIIEEFRYVKEEMQKHGDAPFNPFPIVNNAVSNIICSLCFGRRFDYTNSEFKQMLNFMSRALEVCLNTQLLLVNICSWLYYLPFGPFKELRQIEKDLTLFLKKIIKDHRESLDVENPQDFIDMYLLHVEEEKKNNSNSGFDEDYLFYIIGDLFIAGTDTTTNSLLWCLLYMSLHPNIQEKIHEEIARVIGADRAPSLTDKAQMPYTEATIMEVQRLSTVVPLSIPHMTSEKTVLQGFTIPKGTIILPNLWSVHRDPAIWEKPNDFYPDRFLDDQGQLIKKETFIPFGIGKRVCMGEQLAKMELFLMFVSLMQSFTFVLPKDSKPILTGKYGLTLAPHPFNIIISKR.

4 helical membrane-spanning segments follow: residues 32 to 52 (PTGG…SWLW), 58 to 78 (GIPP…VLLP), 261 to 281 (VCLN…YLPF), and 342 to 362 (LFYI…NSLL). Cys-490 is a heme binding site. The chain crosses the membrane as a helical span at residues 495-515 (LAKMELFLMFVSLMQSFTFVL).

The protein belongs to the cytochrome P450 family. The cofactor is heme.

The protein resides in the endoplasmic reticulum membrane. It is found in the microsome membrane. It localises to the mitochondrion inner membrane. The enzyme catalyses an omega-methyl-long-chain fatty acid + reduced [NADPH--hemoprotein reductase] + O2 = an omega-hydroxy-long-chain fatty acid + oxidized [NADPH--hemoprotein reductase] + H2O + H(+). It catalyses the reaction (5Z,8Z,11Z,14Z)-eicosatetraenoate + reduced [NADPH--hemoprotein reductase] + O2 = 19-hydroxy-(5Z,8Z,11Z,14Z)-eicosatetraenoate + oxidized [NADPH--hemoprotein reductase] + H2O + H(+). The catalysed reaction is (5Z,8Z,11Z,14Z)-eicosatetraenoate + reduced [NADPH--hemoprotein reductase] + O2 = 20-hydroxy-(5Z,8Z,11Z,14Z)-eicosatetraenoate + oxidized [NADPH--hemoprotein reductase] + H2O + H(+). It carries out the reaction N-[(5Z,8Z,11Z,14Z)-eicosatetraenoyl]-serotonin + reduced [NADPH--hemoprotein reductase] + O2 = 2-oxo-N-[(5Z,8Z,11Z,14Z)-eicosatetraenoyl]-serotonin + oxidized [NADPH--hemoprotein reductase] + H2O + H(+). Its function is as follows. A cytochrome P450 monooxygenase involved in the metabolism of arachidonic acid and its conjugates. Mechanistically, uses molecular oxygen inserting one oxygen atom into a substrate, and reducing the second into a water molecule, with two electrons provided by NADPH via cytochrome P450 reductase (CPR; NADPH-ferrihemoprotein reductase). Acts as an omega and omega-1 hydroxylase for arachidonic acid and possibly for other long chain fatty acids. May modulate the arachidonic acid signaling pathway and play a role in other fatty acid signaling processes. May down-regulate the biological activities of N-arachidonoyl-serotonin, an endocannabinoid that has anti-nociceptive effects through inhibition of fatty acid amide hydrolase FAAH, TRPV1 receptor and T-type calcium channels. Catalyzes C-2 oxidation of the indole ring of N-arachidonoyl-serotonin forming a less active product 2-oxo-N-arachidonoyl-serotonin. This chain is Cytochrome P450 2U1 (CYP2U1), found in Bos taurus (Bovine).